A 356-amino-acid polypeptide reads, in one-letter code: Tyrosine recombinase XerS (356 aa).

Positions I16 to T121 constitute a Core-binding (CB) domain. Positions A169–D354 constitute a Tyr recombinase domain. Catalysis depends on residues R210, K234, H306, R309, and H332. Y341 functions as the O-(3'-phospho-DNA)-tyrosine intermediate in the catalytic mechanism.

The protein belongs to the 'phage' integrase family. XerS subfamily.

It localises to the cytoplasm. FtsK is required for recombination. Its function is as follows. Site-specific tyrosine recombinase, which acts by catalyzing the cutting and rejoining of the recombining DNA molecules. Essential to convert dimers of the bacterial chromosome into monomers to permit their segregation at cell division. In Streptococcus pyogenes serotype M49 (strain NZ131), this protein is Tyrosine recombinase XerS.